The sequence spans 57 residues: Large ribosomal subunit protein bL32 (57 aa).

Basic residues predominate over residues 1–19 (MAVPKRRKSRSNTRSRRSQ). Residues 1-22 (MAVPKRRKSRSNTRSRRSQWKA) form a disordered region.

Belongs to the bacterial ribosomal protein bL32 family.

This is Large ribosomal subunit protein bL32 from Mycobacterium tuberculosis (strain ATCC 25177 / H37Ra).